Consider the following 702-residue polypeptide: Putative methyltransferase NSUN7 (702 aa).

Catalysis depends on Cys424, which acts as the Nucleophile. Disordered stretches follow at residues 522-541, 567-593, and 675-702; these read KSSKREKKKKKSKTSLTKAA, ETVTKPSLPQKNTAQVGASSQTRKHKL, and PTPSLSRKGEKPKDDTRSSLLRPPRRWL. Positions 523–534 are enriched in basic residues; the sequence is SSKREKKKKKSK. The segment covering 567–587 has biased composition (polar residues); sequence ETVTKPSLPQKNTAQVGASSQ. Basic and acidic residues predominate over residues 681–691; that stretch reads RKGEKPKDDTR.

This sequence belongs to the class I-like SAM-binding methyltransferase superfamily. RsmB/NOP family.

Its function is as follows. May have S-adenosyl-L-methionine-dependent methyl-transferase activity. In Macaca fascicularis (Crab-eating macaque), this protein is Putative methyltransferase NSUN7 (NSUN7).